A 364-amino-acid polypeptide reads, in one-letter code: Alanine racemase (364 aa).

Lysine 34 serves as the catalytic Proton acceptor; specific for D-alanine. Lysine 34 carries the N6-(pyridoxal phosphate)lysine modification. Substrate is bound at residue arginine 129. Tyrosine 259 acts as the Proton acceptor; specific for L-alanine in catalysis. Methionine 307 lines the substrate pocket.

This sequence belongs to the alanine racemase family. Pyridoxal 5'-phosphate serves as cofactor.

The catalysed reaction is L-alanine = D-alanine. Its pathway is amino-acid biosynthesis; D-alanine biosynthesis; D-alanine from L-alanine: step 1/1. Catalyzes the interconversion of L-alanine and D-alanine. May also act on other amino acids. The sequence is that of Alanine racemase (alr) from Coxiella burnetii (strain CbuG_Q212) (Coxiella burnetii (strain Q212)).